We begin with the raw amino-acid sequence, 177 residues long: F(420)H(2) dehydrogenase subunit I (177 aa).

Residues Met1–Ala21 are disordered. 2 4Fe-4S ferredoxin-type domains span residues Gly76–Ala105 and Trp116–Glu145. 8 residues coordinate [4Fe-4S] cluster: Cys85, Cys88, Cys91, Cys95, Cys125, Cys128, Cys131, and Cys135.

The protein belongs to the complex I 23 kDa subunit family. The FPO complex is composed of at least 13 different subunits. [4Fe-4S] cluster serves as cofactor.

It catalyses the reaction methanophenazine + reduced coenzyme F420-(gamma-L-Glu)(n) = dihydromethanophenazine + oxidized coenzyme F420-(gamma-L-Glu)(n) + H(+). In terms of biological role, component of the F(420)H(2) dehydrogenase (FPO complex) which is part of the energy-conserving F(420)H(2):heterodisulfide oxidoreductase system. The membrane-bound electron transfer system of the complex plays an important role in the metabolism of methylotrophic methanogens when the organisms grow on methanol or methylamines. Catalyzes the oxidation of methanophenazine to dihydromethanophenazine. It shuttles electrons from F(420)H(2), via FAD and iron-sulfur (Fe-S) centers, to methanophenazine (an electron carrier in the membrane). It couples the redox reaction to proton translocation (for every two electrons transferred, two hydrogen ions are translocated across the cytoplasmic membrane), and thus conserves the redox energy in a proton gradient. It also catalyzes the oxidation of F(420)H(2) with quinones such as 2,3-dimethyl-1,4-naphthoquinone, 2-methyl-1,4-naphthoquinone and tetramethyl-p-benzoquinone. This Methanosarcina mazei (strain ATCC BAA-159 / DSM 3647 / Goe1 / Go1 / JCM 11833 / OCM 88) (Methanosarcina frisia) protein is F(420)H(2) dehydrogenase subunit I (fpoI).